Consider the following 444-residue polypeptide: Methylenetetrahydrofolate--tRNA-(uracil-5-)-methyltransferase TrmFO (444 aa).

Residue 10-15 (GAGLAG) coordinates FAD.

The protein belongs to the MnmG family. TrmFO subfamily. Requires FAD as cofactor.

It localises to the cytoplasm. It catalyses the reaction uridine(54) in tRNA + (6R)-5,10-methylene-5,6,7,8-tetrahydrofolate + NADH + H(+) = 5-methyluridine(54) in tRNA + (6S)-5,6,7,8-tetrahydrofolate + NAD(+). The enzyme catalyses uridine(54) in tRNA + (6R)-5,10-methylene-5,6,7,8-tetrahydrofolate + NADPH + H(+) = 5-methyluridine(54) in tRNA + (6S)-5,6,7,8-tetrahydrofolate + NADP(+). Its function is as follows. Catalyzes the folate-dependent formation of 5-methyl-uridine at position 54 (M-5-U54) in all tRNAs. This chain is Methylenetetrahydrofolate--tRNA-(uracil-5-)-methyltransferase TrmFO, found in Streptococcus equi subsp. equi (strain 4047).